Here is a 558-residue protein sequence, read N- to C-terminus: Probable rhamnogalacturonase B (558 aa).

The first 21 residues, 1–21 (MLLDKLSVLSFLGLAPIFAAA), serve as a signal peptide directing secretion. Cys-42 and Cys-68 are joined by a disulfide. A glycan (N-linked (GlcNAc...) asparagine) is linked at Asn-145. Asp-219 functions as the Proton donor in the catalytic mechanism. A disulfide bond links Cys-221 and Cys-238. N-linked (GlcNAc...) asparagine glycosylation is found at Asn-239 and Asn-254. The active site involves His-294. An N-linked (GlcNAc...) asparagine glycan is attached at Asn-321. 2 disulfides stabilise this stretch: Cys-344–Cys-350 and Cys-372–Cys-381. Residues 503-526 (VGAQEGSTTSAPSFAAPSGAGNSP) show a composition bias toward low complexity. The tract at residues 503–558 (VGAQEGSTTSAPSFAAPSGAGNSPQGPTGASGFGEKGQQGEQGEQGEQGEQGVCYV) is disordered.

This sequence belongs to the glycosyl hydrolase 28 family.

The protein localises to the secreted. The catalysed reaction is Endohydrolysis of alpha-D-GalA-(1-&gt;2)-alpha-L-Rha glycosidic bond in the rhamnogalacturonan I backbone with initial inversion of anomeric configuration releasing oligosaccharides with beta-D-GalA at the reducing end.. Its function is as follows. Pectinolytic enzymes consist of four classes of enzymes: pectine lyase, polygalacturonase, pectin methylesterase and rhamnogalacturonase. Hydrolyzes alpha-D-galacturonopyranosyl-(1,2)-alpha-L-rhamnopyranosyl linkages in the backbone of the hairy regions of pectins. In Aspergillus niger (strain ATCC MYA-4892 / CBS 513.88 / FGSC A1513), this protein is Probable rhamnogalacturonase B (rhgB).